The sequence spans 73 residues: Translation initiation factor IF-1 (73 aa).

The region spanning 1 to 73 is the S1-like domain; it reads MPKKEGVIEI…TRGRIVYRYK (73 aa).

The protein belongs to the IF-1 family. As to quaternary structure, component of the 30S ribosomal translation pre-initiation complex which assembles on the 30S ribosome in the order IF-2 and IF-3, IF-1 and N-formylmethionyl-tRNA(fMet); mRNA recruitment can occur at any time during PIC assembly.

It localises to the cytoplasm. Its function is as follows. One of the essential components for the initiation of protein synthesis. Stabilizes the binding of IF-2 and IF-3 on the 30S subunit to which N-formylmethionyl-tRNA(fMet) subsequently binds. Helps modulate mRNA selection, yielding the 30S pre-initiation complex (PIC). Upon addition of the 50S ribosomal subunit IF-1, IF-2 and IF-3 are released leaving the mature 70S translation initiation complex. The protein is Translation initiation factor IF-1 of Nocardioides sp. (strain ATCC BAA-499 / JS614).